We begin with the raw amino-acid sequence, 1803 residues long: 6-methylsalicylic acid synthase (1803 aa).

The interval 1-40 (MEVHGDEVLSVDSGVSTPPSTGSGFRRPLETPGTEIGNLN) is disordered. The span at 13–24 (SGVSTPPSTGSG) shows a compositional bias: low complexity. Positions 44-470 (QNEVAVVGMA…GTVSHAIIEE (427 aa)) constitute a Ketosynthase family 3 (KS3) domain. Active-site for beta-ketoacyl synthase activity residues include Cys-216, His-351, and His-391. The Malonyl-CoA:ACP transacylase (MAT) domain occupies 581–894 (VWVFSGHGAQ…SIAQLHCRGA (314 aa)). Ser-667 functions as the For malonyltransferase activity in the catalytic mechanism. The N-terminal hotdog fold stretch occupies residues 940–1058 (HTLLGQRVPV…GQWEAGGSKN (119 aa)). Residues 940–1218 (HTLLGQRVPV…FSEIEGTPGS (279 aa)) enclose the PKS/mFAS DH domain. His-972 functions as the Proton acceptor; for thioesterase activity in the catalytic mechanism. The segment at 1073–1218 (ANNKLADNFS…FSEIEGTPGS (146 aa)) is C-terminal hotdog fold. The active-site Proton donor; for thioesterase activity is Asp-1129. The tract at residues 1141-1262 (TSVGSTLFFD…KNVADLYCGS (122 aa)) is required for homotetramer formation. Positions 1434–1628 (STYLITGGLG…AVAVQWTSWR (195 aa)) constitute a Ketoreductase (KR) domain. A compositionally biased stretch (low complexity) spans 1701 to 1710 (ASSADAPSAA). Positions 1701–1721 (ASSADAPSAAPKETNEMPESI) are disordered. Residues 1726 to 1801 (TWLDERIRDC…HLVGWFLEKM (76 aa)) form the Carrier domain. An O-(pantetheine 4'-phosphoryl)serine modification is found at Ser-1761. The required for catalytic activity stretch occupies residues 1783 to 1803 (LTWSCPTVSHLVGWFLEKMGN).

In terms of assembly, homotetramer.

The enzyme catalyses 3 malonyl-CoA + acetyl-CoA + NADPH + 3 H(+) = 6-methylsalicylate + 3 CO2 + NADP(+) + 4 CoA + H2O. Its pathway is secondary metabolite biosynthesis. Functionally, 6-methylsalicylic acid synthase; part of the gene cluster that mediates the biosynthesis of terreic acid, a quinone epoxide inhibitor of Bruton's tyrosine kinase. The first step of the pathway is the synthesis of 6-methylsalicylic acid (6-MSA) by the 6-methylsalicylic acid synthase atX. In the biosynthesis of 6-MSA, atX utilizes one acetyl-CoA and three malonyl-CoAs as its substrates and catalyzes a series of programmed reactions including Claisen condensation, reduction, aldol cyclization, and the hydrolytic cleavage that yields 6-MSA. The 6-methylsalicylate 1-monooxygenase atA then catalyzes the decarboxylative hydroxylation of 6-MSA to 3-methylcatechol. The next step is the conversion of 3-methylcatechol to 3-methyl-1,2,4-benzenetriol by cytochrome P450 monooxygenase atE, which is enhanced by cytochrome P450 monooxygenase atG. Then, the epoxidase atD catalyzes the epoxidation and hydroxyl oxidation of 3-methyl-1,2,4-benzenetriol to terremutin. Lastly, GMC oxidoreductase atC oxidizes terremutin to terreic acid. This is 6-methylsalicylic acid synthase from Aspergillus terreus (strain NIH 2624 / FGSC A1156).